The primary structure comprises 392 residues: NAD(P)H-quinone oxidoreductase subunit H, chloroplastic (392 aa).

The protein belongs to the complex I 49 kDa subunit family. In terms of assembly, NDH is composed of at least 16 different subunits, 5 of which are encoded in the nucleus.

Its subcellular location is the plastid. It localises to the chloroplast thylakoid membrane. It carries out the reaction a plastoquinone + NADH + (n+1) H(+)(in) = a plastoquinol + NAD(+) + n H(+)(out). The enzyme catalyses a plastoquinone + NADPH + (n+1) H(+)(in) = a plastoquinol + NADP(+) + n H(+)(out). In terms of biological role, NDH shuttles electrons from NAD(P)H:plastoquinone, via FMN and iron-sulfur (Fe-S) centers, to quinones in the photosynthetic chain and possibly in a chloroplast respiratory chain. The immediate electron acceptor for the enzyme in this species is believed to be plastoquinone. Couples the redox reaction to proton translocation, and thus conserves the redox energy in a proton gradient. This chain is NAD(P)H-quinone oxidoreductase subunit H, chloroplastic, found in Marchantia polymorpha (Common liverwort).